A 486-amino-acid polypeptide reads, in one-letter code: Ribosomal protein uS12 methylthiotransferase RimO (486 aa).

The MTTase N-terminal domain occupies 9 to 125; the sequence is RSVALVTLGC…LSSHLEAILH (117 aa). C18, C54, C88, C191, C195, and C198 together coordinate [4Fe-4S] cluster. The region spanning 177 to 408 is the Radical SAM core domain; it reads LGSGPWAPVK…RLVEELVTQR (232 aa). Residues 410 to 482 enclose the TRAM domain; sequence EERLGEVVEV…GADLLAEPLV (73 aa).

The protein belongs to the methylthiotransferase family. RimO subfamily. The cofactor is [4Fe-4S] cluster.

The protein localises to the cytoplasm. It catalyses the reaction L-aspartate(89)-[ribosomal protein uS12]-hydrogen + (sulfur carrier)-SH + AH2 + 2 S-adenosyl-L-methionine = 3-methylsulfanyl-L-aspartate(89)-[ribosomal protein uS12]-hydrogen + (sulfur carrier)-H + 5'-deoxyadenosine + L-methionine + A + S-adenosyl-L-homocysteine + 2 H(+). Its function is as follows. Catalyzes the methylthiolation of an aspartic acid residue of ribosomal protein uS12. The protein is Ribosomal protein uS12 methylthiotransferase RimO of Kineococcus radiotolerans (strain ATCC BAA-149 / DSM 14245 / SRS30216).